Consider the following 420-residue polypeptide: Exodeoxyribonuclease 7 large subunit (420 aa).

It belongs to the XseA family. In terms of assembly, heterooligomer composed of large and small subunits.

Its subcellular location is the cytoplasm. It catalyses the reaction Exonucleolytic cleavage in either 5'- to 3'- or 3'- to 5'-direction to yield nucleoside 5'-phosphates.. Functionally, bidirectionally degrades single-stranded DNA into large acid-insoluble oligonucleotides, which are then degraded further into small acid-soluble oligonucleotides. In Helicobacter pylori (strain Shi470), this protein is Exodeoxyribonuclease 7 large subunit.